A 199-amino-acid chain; its full sequence is Recombination protein RecR (199 aa).

The C4-type zinc finger occupies 56-71; sequence CAVCGNIAEETQCRIC. Residues 79–174 form the Toprim domain; it reads TVICVVEEPK…KVTRLASGLP (96 aa).

Belongs to the RecR family.

Its function is as follows. May play a role in DNA repair. It seems to be involved in an RecBC-independent recombinational process of DNA repair. It may act with RecF and RecO. This is Recombination protein RecR from Thermobifida fusca (strain YX).